A 153-amino-acid polypeptide reads, in one-letter code: Ribosome maturation factor RimP (153 aa).

This sequence belongs to the RimP family.

It is found in the cytoplasm. Its function is as follows. Required for maturation of 30S ribosomal subunits. In Clostridium botulinum (strain Langeland / NCTC 10281 / Type F), this protein is Ribosome maturation factor RimP.